A 364-amino-acid chain; its full sequence is Ribosomal RNA large subunit methyltransferase M (364 aa).

Residues Ser-187, 220–223 (CPGG), Asp-239, Asp-259, and Asp-276 each bind S-adenosyl-L-methionine. Lys-305 functions as the Proton acceptor in the catalytic mechanism.

The protein belongs to the class I-like SAM-binding methyltransferase superfamily. RNA methyltransferase RlmE family. RlmM subfamily. In terms of assembly, monomer.

The protein localises to the cytoplasm. It carries out the reaction cytidine(2498) in 23S rRNA + S-adenosyl-L-methionine = 2'-O-methylcytidine(2498) in 23S rRNA + S-adenosyl-L-homocysteine + H(+). Functionally, catalyzes the 2'-O-methylation at nucleotide C2498 in 23S rRNA. This chain is Ribosomal RNA large subunit methyltransferase M, found in Aeromonas salmonicida (strain A449).